The following is a 581-amino-acid chain: Probable CDP-diacylglycerol--glycerol-3-phosphate 3-phosphatidyltransferase (581 aa).

Residues 27–65 are disordered; the sequence is RSATTTTTTTTKACGNGSSQSPPSTPLLSSKSSTITSNK. Positions 44-65 are enriched in low complexity; sequence SSQSPPSTPLLSSKSSTITSNK. 160 to 167 contributes to the ATP binding site; sequence ASLYLGTS. 2 consecutive PLD phosphodiesterase domains span residues 248–274 and 487–520; these read TIGVQHIKTYIFDDDLLLSGANLSKDY and DKWTYHAKGLWIQVKNQQHPSITLIGSPNFGSRS. Residues histidine 253, lysine 255, and aspartate 260 contribute to the active site.

Belongs to the CDP-alcohol phosphatidyltransferase class-II family.

It carries out the reaction a CDP-1,2-diacyl-sn-glycerol + sn-glycerol 3-phosphate = a 1,2-diacyl-sn-glycero-3-phospho-(1'-sn-glycero-3'-phosphate) + CMP + H(+). The protein operates within phospholipid metabolism; phosphatidylglycerol biosynthesis; phosphatidylglycerol from CDP-diacylglycerol: step 1/2. In terms of biological role, functions in the biosynthesis of the anionic phospholipids phosphatidylglycerol and cardiolipin. The chain is Probable CDP-diacylglycerol--glycerol-3-phosphate 3-phosphatidyltransferase (pgs1) from Dictyostelium discoideum (Social amoeba).